The following is a 160-amino-acid chain: MKKLAIMAAASMVFAVSSAHAGFTPSGTTGTTKLTVTEECQVRVGDLTVAKTRGQLTDAAPIGPVTVQALGCDARQVALKADTDNFEQGKFFLISDNNRDKLYVNIRPTDNSAWTTDNGVFYKNDVGSWGGIIGIYVDGQQTNTPPGNYTLTLTGGYWAK.

The first 21 residues, 1 to 21 (MKKLAIMAAASMVFAVSSAHA), serve as a signal peptide directing secretion. Positions 22 to 75 (GFTPSGTTGTTKLTVTEECQVRVGDLTVAKTRGQLTDAAPIGPVTVQALGCDAR) are receptor-binding.

It belongs to the Dr-adhesin family.

The protein resides in the fimbrium. In terms of biological role, hemagglutinins of uropathogenic E.coli mediate adherence to the upper urinary tract. These adhesins bind to the Dr blood group antigen and also agglutinate human erythrocytes in the presence of D-mannose (mannose-resistant hemagglutination (MRHA)). This is Dr hemagglutinin structural subunit (draA) from Escherichia coli.